The following is a 271-amino-acid chain: ATP synthase subunit a (271 aa).

5 consecutive transmembrane segments (helical) span residues 38 to 58 (FWTLNIDSMFFSVVLGLLFLA), 100 to 120 (LIAPLALTVFVWVFLMNLMDL), 146 to 166 (DVNITLSMALGVFILILFYSI), 220 to 240 (LIFILIAGLLPWWSQWILNVP), and 242 to 262 (AIFHILIITLQAFIFMVLTIV).

The protein belongs to the ATPase A chain family. In terms of assembly, F-type ATPases have 2 components, CF(1) - the catalytic core - and CF(0) - the membrane proton channel. CF(1) has five subunits: alpha(3), beta(3), gamma(1), delta(1), epsilon(1). CF(0) has three main subunits: a(1), b(2) and c(9-12). The alpha and beta chains form an alternating ring which encloses part of the gamma chain. CF(1) is attached to CF(0) by a central stalk formed by the gamma and epsilon chains, while a peripheral stalk is formed by the delta and b chains.

Its subcellular location is the cell inner membrane. Functionally, key component of the proton channel; it plays a direct role in the translocation of protons across the membrane. This is ATP synthase subunit a from Enterobacter sp. (strain 638).